We begin with the raw amino-acid sequence, 241 residues long: Tetraspanin-1 (241 aa).

The Cytoplasmic segment spans residues 1-11 (MGCFNFIKVMM). Residues 12–32 (ILFNMLIFLCGAALLAVGIWV) traverse the membrane as a helical segment. Residues 33–52 (SVDGPSFVKIFGPMSSSAMQ) lie on the Extracellular side of the membrane. The helical transmembrane segment at 53–73 (FVNVGYFLIAAGAVLFALGFL) threads the bilayer. At 74 to 88 (GCYGAQTESKCALMT) the chain is on the cytoplasmic side. A helical membrane pass occupies residues 89-109 (FFFILLLIFIAEVAAAVVALV). Residues 110 to 211 (YTTLAENFLT…KQLLYDIRTN (102 aa)) lie on the Extracellular side of the membrane. 6 N-linked (GlcNAc...) asparagine glycosylation sites follow: Asn-141, Asn-154, Asn-167, Asn-180, Asn-189, and Asn-194. A helical membrane pass occupies residues 212–232 (AVTVGGVAAGIGGLELAAMIV). Residues 233-241 (SMYLYCNLE) are Cytoplasmic-facing.

It belongs to the tetraspanin (TM4SF) family. In terms of assembly, interacts with SLC19A2. Interacts with NTRK1/TRKA.

The protein resides in the lysosome membrane. In terms of biological role, structural component of specialized membrane microdomains known as tetraspanin-enriched microdomains (TERMs), which act as platforms for receptor clustering and signaling. Participates thereby in diverse biological functions such as cell signal transduction, adhesion, migration and protein trafficking. Regulates neuronal differentiation in response to NGF by facilitating NGF-mediated activation of NTRK1/TRKA receptor tyrosine kinase and subsequent downstream signaling pathways. Plays a role in the inhibition of TNFalpha-induced apoptosis. Mechanistically, inhibits the NF-kappa-B signaling pathway by blocking phosphorylation of CHUK. Also promotes the stability of the thiamine transporter 1/SLC19A2 in intestinal epithelial cells leading to an increase of thiamine uptake process. The polypeptide is Tetraspanin-1 (TSPAN1) (Bos taurus (Bovine)).